We begin with the raw amino-acid sequence, 296 residues long: Phosphatidylglycerol--prolipoprotein diacylglyceryl transferase (296 aa).

7 helical membrane-spanning segments follow: residues 17-37, 59-79, 97-117, 129-149, 203-223, 230-250, and 265-285; these read LAVR…IVVG, MMFY…VLFY, GGMS…LFAW, FVAP…FING, PSQL…LFFF, LGAV…TVEF, and LSMG…LLVW. Arginine 142 provides a ligand contact to a 1,2-diacyl-sn-glycero-3-phospho-(1'-sn-glycerol).

The protein belongs to the Lgt family.

The protein localises to the cell inner membrane. It catalyses the reaction L-cysteinyl-[prolipoprotein] + a 1,2-diacyl-sn-glycero-3-phospho-(1'-sn-glycerol) = an S-1,2-diacyl-sn-glyceryl-L-cysteinyl-[prolipoprotein] + sn-glycerol 1-phosphate + H(+). It functions in the pathway protein modification; lipoprotein biosynthesis (diacylglyceryl transfer). Catalyzes the transfer of the diacylglyceryl group from phosphatidylglycerol to the sulfhydryl group of the N-terminal cysteine of a prolipoprotein, the first step in the formation of mature lipoproteins. The chain is Phosphatidylglycerol--prolipoprotein diacylglyceryl transferase from Burkholderia ambifaria (strain MC40-6).